A 311-amino-acid polypeptide reads, in one-letter code: Mitochondrial arginine transporter BAC1 (311 aa).

Solcar repeat units lie at residues 12–101 (FGFY…AKLF), 111–203 (PRPE…LRYH), and 219–305 (VDMG…SMKM). A run of 6 helical transmembrane segments spans residues 18-38 (YVAGMMAGLATVAVGHPFDTV), 76-96 (GATSSFMGMAFESSLMFGIYS), 113-133 (PEIIVPSAMFGGAIISFVLCP), 178-197 (GGSATLLRECTGNAVFFTVY), 222-242 (GIGVLTGGLGGIACWSAVLPF), and 288-308 (AFPANAAAIVAWEFSMKMLGI).

This sequence belongs to the mitochondrial carrier (TC 2.A.29) family. As to expression, high expression in flowers and siliques. Lower expression in leaves and stems.

The protein localises to the mitochondrion inner membrane. Inhibited by mercuric chloride. Functionally, mitochondrial arginine transporter that catalyzes the counter-exchange of arginine with lysine, ornithine, arginine and histidine. Substrate preference in reconstituted proteoliposomes is arginine &gt; lysine &gt; ornithine &gt; histidine. May be involved in the delivery of arginine, released from seed reserves, to mitochondrial arginase and the export of ornithine. This is Mitochondrial arginine transporter BAC1 (BAC1) from Arabidopsis thaliana (Mouse-ear cress).